The following is a 537-amino-acid chain: CTP synthase (537 aa).

An amidoligase domain region spans residues 1–265 (MVHFIFVTGG…DNKVLKFFNI (265 aa)). Serine 13 serves as a coordination point for CTP. Position 13 (serine 13) interacts with UTP. Residues 14-19 (SLGKGL) and aspartate 71 each bind ATP. Residues aspartate 71 and glutamate 139 each contribute to the Mg(2+) site. CTP contacts are provided by residues 146 to 148 (DIE) and lysine 222. Lysine 222 is a UTP binding site. The Glutamine amidotransferase type-1 domain maps to 290–536 (RIAIIAKYHK…IKAAIEYNKC (247 aa)). Position 352 (glycine 352) interacts with L-glutamine. Residue cysteine 379 is the Nucleophile; for glutamine hydrolysis of the active site. L-glutamine-binding positions include 380–383 (FGMQ), glutamate 403, and arginine 464. Catalysis depends on residues histidine 509 and glutamate 511.

This sequence belongs to the CTP synthase family. In terms of assembly, homotetramer.

The enzyme catalyses UTP + L-glutamine + ATP + H2O = CTP + L-glutamate + ADP + phosphate + 2 H(+). It catalyses the reaction L-glutamine + H2O = L-glutamate + NH4(+). The catalysed reaction is UTP + NH4(+) + ATP = CTP + ADP + phosphate + 2 H(+). The protein operates within pyrimidine metabolism; CTP biosynthesis via de novo pathway; CTP from UDP: step 2/2. Allosterically activated by GTP, when glutamine is the substrate; GTP has no effect on the reaction when ammonia is the substrate. The allosteric effector GTP functions by stabilizing the protein conformation that binds the tetrahedral intermediate(s) formed during glutamine hydrolysis. Inhibited by the product CTP, via allosteric rather than competitive inhibition. Catalyzes the ATP-dependent amination of UTP to CTP with either L-glutamine or ammonia as the source of nitrogen. Regulates intracellular CTP levels through interactions with the four ribonucleotide triphosphates. The chain is CTP synthase from Rickettsia peacockii (strain Rustic).